Consider the following 176-residue polypeptide: Heme oxygenase HutZ (176 aa).

His170 serves as a coordination point for heme.

It belongs to the heme oxygenase HugZ/HutZ family. Homodimer. Interacts with HutX, leading to the transfer of the heme from HutX to apo-HutZ.

The enzyme catalyses heme b + 3 AH2 + 3 O2 + 2 H(+) = biliverdin IXbeta + CO + Fe(2+) + 3 A + 3 H2O. It catalyses the reaction heme b + 3 AH2 + 3 O2 + 3 H(+) = biliverdin IXdelta + CO + Fe(2+) + 3 A + 3 H2O. Its activity is regulated as follows. Activity is pH-dependent. A proximal hydrogen bond between Asp-132 and the heme axial ligant His-170 is essential for heme degradation activity. Heme-degradation reaction is inhibited by iron chelators. Functionally, involved in heme degradation. Catalyzes the degradation of heme to biliverdin, with the release of iron. Forms biliverdin beta and delta. Binds heme with high efficiency. This chain is Heme oxygenase HutZ, found in Vibrio cholerae serotype O1 (strain ATCC 39315 / El Tor Inaba N16961).